Reading from the N-terminus, the 489-residue chain is Rhamnulokinase (489 aa).

13–17 contributes to the ATP binding site; sequence ASSGR. Cys-68 and Cys-222 are disulfide-bonded. Substrate-binding positions include Gly-83 and 236-238; that span reads HDT. Residue Asp-237 is the Proton acceptor of the active site. Thr-259 serves as a coordination point for ATP. Asn-296 serves as a coordination point for substrate. Gln-304 is an ATP binding site. Cys-353 and Cys-370 are disulfide-bonded. Gly-402 serves as a coordination point for ATP. Cysteines 413 and 417 form a disulfide.

This sequence belongs to the rhamnulokinase family. Requires Mg(2+) as cofactor.

The catalysed reaction is L-rhamnulose + ATP = L-rhamnulose 1-phosphate + ADP + H(+). The protein operates within carbohydrate degradation; L-rhamnose degradation; glycerone phosphate from L-rhamnose: step 2/3. Its function is as follows. Involved in the catabolism of L-rhamnose (6-deoxy-L-mannose). Catalyzes the transfer of the gamma-phosphate group from ATP to the 1-hydroxyl group of L-rhamnulose to yield L-rhamnulose 1-phosphate. In Salmonella schwarzengrund (strain CVM19633), this protein is Rhamnulokinase.